Reading from the N-terminus, the 1487-residue chain is Collagen alpha-1(II) chain (1487 aa).

Residues 1-25 (MIRLGAPQTLVLLTLLVAAVLRCQG) form the signal peptide. The propeptide at 26–181 (QDVQEAGSCV…PPGLGGNFAA (156 aa)) is N-terminal propeptide. Residues 32–90 (GSCVQDGQRYNDKDVWKPEPCRICVCDTGTVLCDDIICEDVKDCLSPEIPFGECCPICP) enclose the VWFC domain. The disordered stretch occupies residues 97–1237 (SGQPGPKGQK…PREKGPDPLQ (1141 aa)). Basic and acidic residues-rich tracts occupy residues 105–116 (QKGEPGDIKDIV) and 133–154 (PRGD…RDGE). The span at 158–173 (PGNPGPPGPPGPPGPP) shows a compositional bias: pro residues. Lys190 is subject to 5-hydroxylysine. An O-linked (Gal...) hydroxylysine glycan is attached at Lys190. Positions 201–1214 (GPMGPMGPRG…PGPPGPPGPP (1014 aa)) are triple-helical region. Positions 208–217 (PRGPPGPAGA) are enriched in pro residues. Low complexity predominate over residues 218–239 (PGPQGFQGNPGEPGEPGVSGPM). The segment covering 241-250 (PRGPPGPPGK) has biased composition (pro residues). Residues 251-265 (PGDDGEAGKPGKAGE) show a composition bias toward basic and acidic residues. 5-hydroxylysine occurs at positions 287, 299, and 308. Lys287, Lys299, and Lys308 each carry an O-linked (Gal...) hydroxylysine glycan. Composition is skewed to low complexity over residues 310–320 (ESGSPGENGSP) and 335–350 (TGPA…DGQP). Residues 360 to 369 (GPAGGPGFPG) are compositionally biased toward gly residues. 2 stretches are compositionally biased toward low complexity: residues 370–382 (APGA…PTGA) and 391–431 (PRGE…AGAP). The residue at position 374 (Lys374) is a 5-hydroxylysine. O-linked (Gal...) hydroxylysine glycosylation occurs at Lys374. Positions 433–442 (FPGPRGPPGP) are enriched in pro residues. A 5-hydroxylysine mark is found at Lys608 and Lys620. O-linked (Gal...) hydroxylysine glycosylation is found at Lys608 and Lys620. Low complexity-rich tracts occupy residues 622 to 631 (LPGAPGLRGL) and 656 to 667 (QGAPGPSGFQGL). 4-hydroxyproline occurs at positions 659 and 668. Pro670 carries the post-translational modification 3-hydroxyproline. 4-hydroxyproline occurs at positions 671 and 674. Basic and acidic residues predominate over residues 764–775 (KGDRGDVGEKGP). Low complexity-rich tracts occupy residues 833-848 (AGFA…PGAK) and 877-913 (PTGV…SNGN). Residue Pro907 is modified to 3-hydroxyproline. Pro908, Pro914, and Pro920 each carry 4-hydroxyproline. A compositionally biased stretch (pro residues) spans 1069–1079 (APGPPGSPGPA). The span at 1115 to 1129 (RGDKGEAGEPGERGL) shows a compositional bias: basic and acidic residues. At Lys1130 the chain carries 5-hydroxylysine. An O-linked (Gal...) hydroxylysine glycan is attached at Lys1130. At Pro1144 the chain carries 3-hydroxyproline. Residues 1148-1157 (SGDQGASGPA) show a composition bias toward low complexity. Pro1181 is subject to 4-hydroxyproline. Pro1186 carries the 3-hydroxyproline modification. A 4-hydroxyproline modification is found at Pro1187. Residues 1199–1216 (AGPPGNPGPPGPPGPPGP) show a composition bias toward pro residues. At Pro1201 the chain carries 3-hydroxyproline. A 4-hydroxyproline mark is found at Pro1202 and Pro1205. Pro1207 carries the post-translational modification 3-hydroxyproline. A 4-hydroxyproline mark is found at Pro1208 and Pro1211. A 3-hydroxyproline modification is found at Pro1213. 4-hydroxyproline is present on Pro1214. A nonhelical region (C-terminal) region spans residues 1215–1241 (GPGIDMSAFAGLGPREKGPDPLQYMRA). The region spanning 1253–1487 (AEVDATLKSL…GVDIGPVCFL (235 aa)) is the Fibrillar collagen NC1 domain. 3 cysteine pairs are disulfide-bonded: Cys1283–Cys1315, Cys1323–Cys1485, and Cys1393–Cys1438. Ca(2+) contacts are provided by Asp1301, Asn1303, Gln1304, Cys1306, and Asp1309. Asn1388 carries an N-linked (GlcNAc...) asparagine glycan.

Belongs to the fibrillar collagen family. As to quaternary structure, homotrimers of alpha 1(II) chains. Post-translationally, the N-telopeptide is covalently linked to the helical COL2 region of alpha 1(IX), alpha 2(IX) and alpha 3(IX) chain. The C-telopeptide is covalently linked to an another site in the helical region of alpha 3(IX) COL2. In terms of processing, contains mostly 4-hydroxyproline. Prolines at the third position of the tripeptide repeating unit (G-X-P) are 4-hydroxylated in some or all of the chains. Contains 3-hydroxyproline at a few sites. This modification occurs on the first proline residue in the sequence motif Gly-Pro-Hyp, where Hyp is 4-hydroxyproline. Post-translationally, lysine residues at the third position of the tripeptide repeating unit (G-X-Y) are 5-hydroxylated in some or all of the chains. In terms of processing, O-glycosylated on hydroxylated lysine residues. The O-linked glycan consists of a Glc-Gal disaccharide. In terms of tissue distribution, isoform 2 is highly expressed in juvenile chondrocyte and low in fetal chondrocyte.

It localises to the secreted. Its subcellular location is the extracellular space. The protein resides in the extracellular matrix. Functionally, type II collagen is specific for cartilaginous tissues. It is essential for the normal embryonic development of the skeleton, for linear growth and for the ability of cartilage to resist compressive forces. In Homo sapiens (Human), this protein is Collagen alpha-1(II) chain.